The chain runs to 466 residues: UDP-N-acetylglucosamine--dolichyl-phosphate N-acetylglucosaminephosphotransferase (466 aa).

Residues 12–32 (AAFAVAAHAPVLGLILLGSIV) form a helical membrane-spanning segment. Aspartate 57 serves as a coordination point for UDP-N-acetyl-alpha-D-glucosamine. Asparagine 59 carries N-linked (GlcNAc...) asparagine glycosylation. Residue glutamate 90 participates in UDP-N-acetyl-alpha-D-glucosamine binding. 2 helical membrane-spanning segments follow: residues 91–111 (SLGI…TVCL) and 124–144 (PYAS…LGFV). Position 155 (lysine 155) interacts with dolichyl phosphate. The next 2 membrane-spanning stretches (helical) occupy residues 156-176 (IILT…SLSV) and 236-256 (GAAL…LCIF). 255 to 263 (IFCTNSINI) is a dolichyl phosphate binding site. Asparagine 262 is a binding site for Mg(2+). 4 helical membrane-spanning segments follow: residues 263-283 (ILAG…VASV), 316-336 (DHQL…LALW), 345-365 (VFVG…SSIT), and 374-394 (LFFA…FSIV). Asparagine 268 contacts UDP-N-acetyl-alpha-D-glucosamine. Aspartate 349 contacts Mg(2+). 398–400 (RHR) lines the UDP-N-acetyl-alpha-D-glucosamine pocket. N-linked (GlcNAc...) asparagine glycosylation occurs at asparagine 416. A helical transmembrane segment spans residues 442 to 462 (CQVIACVLGFVVRYVLSAFLY).

Belongs to the glycosyltransferase 4 family. The cofactor is Mg(2+).

It localises to the endoplasmic reticulum membrane. The enzyme catalyses a di-trans,poly-cis-dolichyl phosphate + UDP-N-acetyl-alpha-D-glucosamine = an N-acetyl-alpha-D-glucosaminyl-diphospho-di-trans,poly-cis-dolichol + UMP. The protein operates within protein modification; protein glycosylation. Its activity is regulated as follows. Inhibited by natural nucleoside antibiotic tunicamycin, which acts as a structural analog and competitor of UDP-GlcNAc. Its function is as follows. UDP-N-acetylglucosamine--dolichyl-phosphate N-acetylglucosaminephosphotransferase that operates in the biosynthetic pathway of dolichol-linked oligosaccharides, the glycan precursors employed in protein asparagine (N)-glycosylation. The assembly of dolichol-linked oligosaccharides begins on the cytosolic side of the endoplasmic reticulum membrane and finishes in its lumen. The sequential addition of sugars to dolichol pyrophosphate produces dolichol-linked oligosaccharides containing fourteen sugars, including two GlcNAcs, nine mannoses and three glucoses. Once assembled, the oligosaccharide is transferred from the lipid to nascent proteins by oligosaccharyltransferases. Catalyzes the initial step of dolichol-linked oligosaccharide biosynthesis, transfering GlcNAc-1-P from cytosolic UDP-GlcNAc onto the carrier lipid dolichyl phosphate (P-dolichol), yielding GlcNAc-P-P-dolichol embedded in the cytoplasmic leaflet of the endoplasmic reticulum membrane. The sequence is that of UDP-N-acetylglucosamine--dolichyl-phosphate N-acetylglucosaminephosphotransferase (NAGT) from Leishmania amazonensis.